The chain runs to 291 residues: 4-hydroxy-tetrahydrodipicolinate synthase (291 aa).

Pyruvate is bound at residue Thr-45. Catalysis depends on Tyr-133, which acts as the Proton donor/acceptor. Lys-161 functions as the Schiff-base intermediate with substrate in the catalytic mechanism. Pyruvate is bound at residue Ile-203.

This sequence belongs to the DapA family. As to quaternary structure, homotetramer; dimer of dimers.

The protein resides in the cytoplasm. The catalysed reaction is L-aspartate 4-semialdehyde + pyruvate = (2S,4S)-4-hydroxy-2,3,4,5-tetrahydrodipicolinate + H2O + H(+). Its pathway is amino-acid biosynthesis; L-lysine biosynthesis via DAP pathway; (S)-tetrahydrodipicolinate from L-aspartate: step 3/4. Functionally, catalyzes the condensation of (S)-aspartate-beta-semialdehyde [(S)-ASA] and pyruvate to 4-hydroxy-tetrahydrodipicolinate (HTPA). The sequence is that of 4-hydroxy-tetrahydrodipicolinate synthase from Teredinibacter turnerae (strain ATCC 39867 / T7901).